The following is an 856-amino-acid chain: Leucine--tRNA ligase (856 aa).

The short motif at 53–63 (PYPSGNLHMGH) is the 'HIGH' region element. A 'KMSKS' region motif is present at residues 622-626 (KMSKS). Lys625 serves as a coordination point for ATP.

The protein belongs to the class-I aminoacyl-tRNA synthetase family.

The protein localises to the cytoplasm. It carries out the reaction tRNA(Leu) + L-leucine + ATP = L-leucyl-tRNA(Leu) + AMP + diphosphate. This is Leucine--tRNA ligase from Prochlorococcus marinus (strain MIT 9312).